The sequence spans 553 residues: Membrane protein insertase YidC (553 aa).

5 consecutive transmembrane segments (helical) span residues 7-24, 365-385, 435-455, 474-494, and 509-529; these read VLWV…DNWQ, WGWA…PLSA, LPVV…LASV, PFFI…SLNP, and PIAF…YYVV.

The protein belongs to the OXA1/ALB3/YidC family. Type 1 subfamily. In terms of assembly, interacts with the Sec translocase complex via SecD. Specifically interacts with transmembrane segments of nascent integral membrane proteins during membrane integration.

It is found in the cell inner membrane. Required for the insertion and/or proper folding and/or complex formation of integral membrane proteins into the membrane. Involved in integration of membrane proteins that insert both dependently and independently of the Sec translocase complex, as well as at least some lipoproteins. Aids folding of multispanning membrane proteins. The polypeptide is Membrane protein insertase YidC (Burkholderia orbicola (strain MC0-3)).